The sequence spans 59 residues: Small, acid-soluble spore protein H 2 (59 aa).

This sequence belongs to the SspH family.

The protein resides in the spore core. This is Small, acid-soluble spore protein H 2 from Geobacillus kaustophilus (strain HTA426).